A 607-amino-acid polypeptide reads, in one-letter code: DNA mismatch repair protein MutL (607 aa).

It belongs to the DNA mismatch repair MutL/HexB family.

Its function is as follows. This protein is involved in the repair of mismatches in DNA. It is required for dam-dependent methyl-directed DNA mismatch repair. May act as a 'molecular matchmaker', a protein that promotes the formation of a stable complex between two or more DNA-binding proteins in an ATP-dependent manner without itself being part of a final effector complex. This chain is DNA mismatch repair protein MutL, found in Gemmatimonas aurantiaca (strain DSM 14586 / JCM 11422 / NBRC 100505 / T-27).